A 161-amino-acid chain; its full sequence is Putative acetyltransferase SAV0762 (161 aa).

This sequence belongs to the transferase hexapeptide repeat family.

This Staphylococcus aureus (strain Mu50 / ATCC 700699) protein is Putative acetyltransferase SAV0762.